We begin with the raw amino-acid sequence, 529 residues long: PTS system alpha-glucoside-specific EIICB component (529 aa).

The 416-residue stretch at 1 to 416 (MMKKVQRFGG…MDLKTPGRED (416 aa)) folds into the PTS EIIC type-1 domain. The next 12 helical transmembrane spans lie at 8–28 (FGGA…VVGL), 59–79 (GWTV…ISLA), 91–111 (FALY…FYGI), 130–150 (VPTL…VVYL), 170–190 (VFVY…TVLI), 198–218 (ISAL…IYTF), 222–242 (ILIP…GPAA), 272–292 (GGFA…ALAM), 304–324 (VAAL…TEPL), 328–348 (FLFI…TMAA), 352–372 (AFGV…LNWI), and 380–400 (GTVI…FVVF). A PTS EIIB type-1 domain is found at 450-529 (AQKGAIILEA…ERIEEMMKKG (80 aa)). Cysteine 472 functions as the Phosphocysteine intermediate; for EIIB activity in the catalytic mechanism.

The protein resides in the cell membrane. In terms of biological role, the phosphoenolpyruvate-dependent sugar phosphotransferase system (sugar PTS), a major carbohydrate active -transport system, catalyzes the phosphorylation of incoming sugar substrates concomitantly with their translocation across the cell membrane. This system is probably involved in transport of the alpha-glucosides trehalulose, turanose, maltulose and palatinose. The sequence is that of PTS system alpha-glucoside-specific EIICB component from Leptotrichia buccalis (strain ATCC 14201 / DSM 1135 / JCM 12969 / NCTC 10249 / C-1013-b).